The following is a 145-amino-acid chain: Large ribosomal subunit protein uL13 (145 aa).

The protein belongs to the universal ribosomal protein uL13 family. Part of the 50S ribosomal subunit.

Its function is as follows. This protein is one of the early assembly proteins of the 50S ribosomal subunit, although it is not seen to bind rRNA by itself. It is important during the early stages of 50S assembly. The chain is Large ribosomal subunit protein uL13 from Bacillus cereus (strain ZK / E33L).